The sequence spans 901 residues: PGC-1 and ERR-induced regulator in muscle protein 1 (901 aa).

3 disordered regions span residues 29-511, 564-671, and 731-752; these read QAGL…MPAS, SLEG…MGPG, and RHQE…APPP. Polar residues predominate over residues 100–112; it reads GQQTPSTSAQSEA. A compositionally biased stretch (low complexity) spans 157–178; it reads GEPAGSPESPVHSAAPQRSPGS. Polar residues-rich tracts occupy residues 267–276, 347–379, 387–418, 426–457, and 465–484; these read LSTSVSTTEQ, DESQ…QSTP, EPQS…QSTP, and EPQS…STPT. A compositionally biased stretch (low complexity) spans 608-624; the sequence is PSSEEPGSGEVSGPLSP.

Its subcellular location is the cytoplasm. It localises to the nucleus. Regulates the expression of selective PPARGC1A/B and ESRRA/B/G target genes with roles in glucose and lipid metabolism, energy transfer, contractile function, muscle mitochondrial biogenesis and oxidative capacity. Required for the efficient induction of MT-CO2, MT-CO3, COX4I1, TFB1M, TFB2M, POLRMT and SIRT3 by PPARGC1A. Positively regulates the PPARGC1A/ESRRG-induced expression of CKMT2, TNNI3 and SLC2A4 and negatively regulates the PPARGC1A/ESRRG-induced expression of PDK4. This is PGC-1 and ERR-induced regulator in muscle protein 1 (PERM1) from Bos taurus (Bovine).